Here is a 1755-residue protein sequence, read N- to C-terminus: E3 ubiquitin-protein ligase UBR2 (1755 aa).

Position 2 is an N-acetylalanine (alanine 2). Lysine 94 participates in a covalent cross-link: Glycyl lysine isopeptide (Lys-Gly) (interchain with G-Cter in ubiquitin). A UBR-type zinc finger spans residues 97-168 (HLCGRVFKVG…EGPYCQKHEL (72 aa)). Zn(2+)-binding residues include cysteine 99, cysteine 112, cysteine 115, cysteine 124, cysteine 127, histidine 133, and histidine 136. Phenylalanine 148 is a binding site for a peptide. Residue cysteine 149 coordinates Zn(2+). Aspartate 150 provides a ligand contact to a peptide. Cysteine 151 serves as a coordination point for Zn(2+). Aspartate 153 lines the a peptide pocket. Lysine 158 participates in a covalent cross-link: Glycyl lysine isopeptide (Lys-Gly) (interchain with G-Cter in ubiquitin). Cysteine 163 is a binding site for Zn(2+). Lysine 165 is covalently cross-linked (Glycyl lysine isopeptide (Lys-Gly) (interchain with G-Cter in ubiquitin)). Residue histidine 166 coordinates Zn(2+). Residues lysine 248, lysine 255, and lysine 470 each participate in a glycyl lysine isopeptide (Lys-Gly) (interchain with G-Cter in ubiquitin) cross-link. Serine 476 is modified (phosphoserine). Glycyl lysine isopeptide (Lys-Gly) (interchain with G-Cter in ubiquitin) cross-links involve residues lysine 488, lysine 568, lysine 779, and lysine 789. Positions 1004–1034 (ESSPTSPVAETEGTIMEESSRDKDKAERKRK) are disordered. Positions 1019–1054 (MEESSRDKDKAERKRKAEIARLRREKIMAQMSEMQR) form a coiled coil. Residues 1021 to 1034 (ESSRDKDKAERKRK) show a composition bias toward basic and acidic residues. Residues cysteine 1108, cysteine 1111, cysteine 1168, histidine 1170, histidine 1173, cysteine 1176, cysteine 1210, and cysteine 1213 each coordinate Zn(2+). The segment at 1108 to 1214 (CILCQEEQEV…NGEFLCPLCE (107 aa)) adopts an RING-type; atypical zinc-finger fold. The segment at 1261-1287 (RKEESTPNNASTKNSENVDELQLPEGF) is disordered. Residues 1266–1275 (TPNNASTKNS) show a composition bias toward polar residues. Residues lysine 1496, lysine 1599, and lysine 1689 each participate in a glycyl lysine isopeptide (Lys-Gly) (interchain with G-Cter in ubiquitin) cross-link. Serine 1694 carries the post-translational modification Phosphoserine. Residue tyrosine 1697 is modified to Phosphotyrosine.

Belongs to the E3 ubiquitin-protein ligase UBR1-like family. As to quaternary structure, interacts with UBE2B; promotes the UBE2B-H2A interaction and the ubiquitination of histone H2A by UBE2B and UBR2. Interacts with RECQL4. Interacts with TEX19; does not lead to TEX19 degradation and stabilizes it. Interacts with CASP8. Interacts with ATXN3. Interacts with UBE2O. Dephosphorylated by DUSP22 at Ser-1694 and Tyr-1697, leading to subsequent ubiquitination and proteasomal degradation. In terms of processing, 'Lys-48'-linked ubiquitinated at Lys-94, Lys-779 and Lys-1599 following DUSP22-mediated dephosphorylation of Ser-1694 and Tyr-1697 which promotes UBR2 interaction with the SCF(FBW1A) E3 ubiquitin-protein ligase complex. In terms of tissue distribution, broadly expressed, with highest levels in skeletal muscle, kidney and pancreas. Present in acinar cells of the pancreas (at protein level).

The protein localises to the nucleus. The protein resides in the chromosome. The enzyme catalyses S-ubiquitinyl-[E2 ubiquitin-conjugating enzyme]-L-cysteine + [acceptor protein]-L-lysine = [E2 ubiquitin-conjugating enzyme]-L-cysteine + N(6)-ubiquitinyl-[acceptor protein]-L-lysine.. It participates in protein modification; protein ubiquitination. In terms of biological role, E3 ubiquitin-protein ligase which is a component of the N-end rule pathway. Recognizes and binds to proteins bearing specific N-terminal residues (N-degrons) that are destabilizing according to the N-end rule, leading to their ubiquitination and subsequent degradation. Recognizes both type-1 and type-2 N-degrons, containing positively charged amino acids (Arg, Lys and His) and bulky and hydrophobic amino acids, respectively. Does not ubiquitinate proteins that are acetylated at the N-terminus. In contrast, it strongly binds methylated N-degrons. Plays a critical role in chromatin inactivation and chromosome-wide transcriptional silencing during meiosis via ubiquitination of histone H2A. Binds leucine and is a negative regulator of the leucine-mTOR signaling pathway, thereby controlling cell growth. Required for spermatogenesis, promotes, with Tex19.1, SPO11-dependent recombination foci to accumulate and drive robust homologous chromosome synapsis. Polyubiquitinates LINE-1 retrotransposon encoded, LIRE1, which induces degradation, inhibiting LINE-1 retrotransposon mobilization. Catalyzes ubiquitination and degradation of the N-terminal part of NLRP1 following NLRP1 activation by pathogens and other damage-associated signals: ubiquitination promotes degradation of the N-terminal part and subsequent release of the cleaved C-terminal part of NLRP1, which polymerizes and forms the NLRP1 inflammasome followed by host cell pyroptosis. Plays a role in T-cell receptor signaling by inducing 'Lys-63'-linked ubiquitination of lymphocyte cell-specific kinase LCK. This activity is regulated by DUSP22, which induces 'Lys-48'-linked ubiquitination of UBR2, leading to its proteasomal degradation by SCF E3 ubiquitin-protein ligase complex. The polypeptide is E3 ubiquitin-protein ligase UBR2 (UBR2) (Homo sapiens (Human)).